Consider the following 330-residue polypeptide: Ribosomal RNA small subunit methyltransferase C (330 aa).

The protein belongs to the methyltransferase superfamily. RsmC family. In terms of assembly, monomer.

The protein localises to the cytoplasm. The catalysed reaction is guanosine(1207) in 16S rRNA + S-adenosyl-L-methionine = N(2)-methylguanosine(1207) in 16S rRNA + S-adenosyl-L-homocysteine + H(+). Specifically methylates the guanine in position 1207 of 16S rRNA in the 30S particle. The protein is Ribosomal RNA small subunit methyltransferase C of Haemophilus influenzae (strain 86-028NP).